A 1755-amino-acid polypeptide reads, in one-letter code: Transposon Ty1-ML1 Gag-Pol polyprotein (1755 aa).

3 stretches are compositionally biased toward polar residues: residues 1–23 (MESQ…SVTS), 48–60 (TKAN…TPAS), and 127–152 (QSQF…GNTF). 3 disordered regions span residues 1–88 (MESQ…YPQQ), 126–173 (PQSQ…RPPP), and 352–421 (GSRN…SKST). Low complexity predominate over residues 153 to 165 (TDSSSADSDMTST). The RNA-binding stretch occupies residues 299-401 (NNGIHINNKV…NSKSKTARAH (103 aa)). The span at 402–418 (NVSTSNNSPSTDNDSIS) shows a compositional bias: low complexity. D461 (for protease activity; shared with dimeric partner) is an active-site residue. The integrase-type zinc finger-like stretch occupies residues 583–640 (NVHTSESTRKYPYPFIHRMLAHANAQTIRYSLKNNTITYFNESDVDWSSAIDYQCPDC). In terms of domain architecture, Integrase catalytic spans 660 to 835 (NSYEPFQYLH…AGLDISTLLP (176 aa)). D671 and D736 together coordinate Mg(2+). 3 disordered regions span residues 956–1087 (SKAV…ETEK), 1092–1111 (RSPS…NIVP), and 1130–1171 (DLPL…DSNA). Residues 960 to 969 (SPTDSTPPST) show a composition bias toward low complexity. The segment covering 1005–1015 (STPQISNIEST) has biased composition (polar residues). Over residues 1038 to 1053 (ESSHASKSKDFRHSDS) the composition is skewed to basic and acidic residues. Composition is skewed to polar residues over residues 1054–1082 (YSEN…QISD) and 1101–1111 (PENNSSHNIVP). The short motif at 1178–1212 (KKRSLEDNETEIKVSRDTWNTKNMRSLEPPRSKKR) is the Bipartite nuclear localization signal element. The Reverse transcriptase Ty1/copia-type domain maps to 1338 to 1476 (NNYYITQLDI…DILGLEIKYQ (139 aa)). D1346, D1427, D1428, D1610, E1652, and D1685 together coordinate Mg(2+). One can recognise an RNase H Ty1/copia-type domain in the interval 1610–1752 (DASYGNQPYY…IKTFKLLTNK (143 aa)).

As to quaternary structure, the capsid protein forms a homotrimer, from which the VLPs are assembled. The protease is a homodimer, whose active site consists of two apposed aspartic acid residues. Initially, virus-like particles (VLPs) are composed of the structural unprocessed proteins Gag and Gag-Pol, and also contain the host initiator methionine tRNA (tRNA(i)-Met) which serves as a primer for minus-strand DNA synthesis, and a dimer of genomic Ty RNA. Processing of the polyproteins occurs within the particle and proceeds by an ordered pathway, called maturation. First, the protease (PR) is released by autocatalytic cleavage of the Gag-Pol polyprotein yielding capsid protein p45 and a Pol-p154 precursor protein. This cleavage is a prerequisite for subsequent processing of Pol-p154 at the remaining sites to release the mature structural and catalytic proteins. Maturation takes place prior to the RT reaction and is required to produce transposition-competent VLPs.

It is found in the cytoplasm. The protein resides in the nucleus. The enzyme catalyses DNA(n) + a 2'-deoxyribonucleoside 5'-triphosphate = DNA(n+1) + diphosphate. It carries out the reaction Endonucleolytic cleavage to 5'-phosphomonoester.. Functionally, capsid protein (CA) is the structural component of the virus-like particle (VLP), forming the shell that encapsulates the retrotransposons dimeric RNA genome. The particles are assembled from trimer-clustered units and there are holes in the capsid shells that allow for the diffusion of macromolecules. CA also has nucleocapsid-like chaperone activity, promoting primer tRNA(i)-Met annealing to the multipartite primer-binding site (PBS), dimerization of Ty1 RNA and initiation of reverse transcription. Its function is as follows. The aspartyl protease (PR) mediates the proteolytic cleavages of the Gag and Gag-Pol polyproteins after assembly of the VLP. Reverse transcriptase/ribonuclease H (RT) is a multifunctional enzyme that catalyzes the conversion of the retro-elements RNA genome into dsDNA within the VLP. The enzyme displays a DNA polymerase activity that can copy either DNA or RNA templates, and a ribonuclease H (RNase H) activity that cleaves the RNA strand of RNA-DNA heteroduplexes during plus-strand synthesis and hydrolyzes RNA primers. The conversion leads to a linear dsDNA copy of the retrotransposon that includes long terminal repeats (LTRs) at both ends. In terms of biological role, integrase (IN) targets the VLP to the nucleus, where a subparticle preintegration complex (PIC) containing at least integrase and the newly synthesized dsDNA copy of the retrotransposon must transit the nuclear membrane. Once in the nucleus, integrase performs the integration of the dsDNA into the host genome. This chain is Transposon Ty1-ML1 Gag-Pol polyprotein (TY1B-ML1), found in Saccharomyces cerevisiae (strain ATCC 204508 / S288c) (Baker's yeast).